The sequence spans 300 residues: Ribonuclease HIII (300 aa).

The RNase H type-2 domain maps to 83–300; the sequence is IPIIGSDEVG…THKAQALLTK (218 aa). Residues Asp89, Glu90, and Asp194 each contribute to the a divalent metal cation site.

Belongs to the RNase HII family. RnhC subfamily. Mn(2+) serves as cofactor. The cofactor is Mg(2+).

The protein resides in the cytoplasm. The catalysed reaction is Endonucleolytic cleavage to 5'-phosphomonoester.. Endonuclease that specifically degrades the RNA of RNA-DNA hybrids. This is Ribonuclease HIII from Streptococcus pyogenes serotype M49 (strain NZ131).